Consider the following 386-residue polypeptide: MDILRKVAEIHGTPTYVYFEETLRKRSRLVKEVFEGVNLLPTFAVKANNNPVLLKILREEGFGMDVVTKGELLAAKLAGVPSHTVVWNGNGKSRDQMEHFLREDVRIVNVDSFEEMEIWRELNPEGVEYFIRVNPEVDAKTHPHISTGLKKHKFGIPLEDLDSFMERFRSMNIRGLHVHIGSQITRVEPFVEAFSKVVRASERYGFEEINIGGGWGINYSGEELDLSSYREKVVPDLKRFKRVIVEIGRYIVAPSGYLLLRVVLVKRRHNKAFVVVDGGMNVLIRPALYSAYHRIFVLGKQGKEMRADVVGPLCESGDVIAYDRELPEVEPGDIIAVENAGAYGYTMSNNYNSTTRPAEVLVRENGRISLIRRRETEMDIFKDVVM.

Position 46 is an N6-(pyridoxal phosphate)lysine (lysine 46). Residues glycine 214 and 246–249 contribute to the pyridoxal 5'-phosphate site; that span reads EIGR. Residues arginine 249, arginine 285, and tyrosine 289 each contribute to the substrate site. Catalysis depends on cysteine 314, which acts as the Proton donor. Positions 315 and 343 each coordinate substrate. A pyridoxal 5'-phosphate-binding site is contributed by tyrosine 343.

It belongs to the Orn/Lys/Arg decarboxylase class-II family. LysA subfamily. In terms of assembly, homodimer. Requires pyridoxal 5'-phosphate as cofactor.

The enzyme catalyses meso-2,6-diaminopimelate + H(+) = L-lysine + CO2. It participates in amino-acid biosynthesis; L-lysine biosynthesis via DAP pathway; L-lysine from DL-2,6-diaminopimelate: step 1/1. Functionally, specifically catalyzes the decarboxylation of meso-diaminopimelate (meso-DAP) to L-lysine. The chain is Diaminopimelate decarboxylase from Thermotoga maritima (strain ATCC 43589 / DSM 3109 / JCM 10099 / NBRC 100826 / MSB8).